We begin with the raw amino-acid sequence, 200 residues long: Phospholipase A2 inhibitor NAI (200 aa).

Positions 1 to 19 (MKSLLFCCLFGTFLATGMC) are cleaved as a signal peptide. Disulfide bonds link C22-C46, C25-C32, C39-C67, C73-C94, C95-C100, C120-C145, C138-C165, and C171-C191.

Belongs to the CNF-like-inhibitor family. In terms of assembly, heterotrimer of 2 subunits A and 1 subunit B; non-covalently linked. As to expression, expressed by the liver.

It localises to the secreted. Inhibits the enzymatic activity of all phospholipase A2 tested, binding with micromole to nanomole affinity. This Notechis ater (Black tiger snake) protein is Phospholipase A2 inhibitor NAI.